An 892-amino-acid chain; its full sequence is Inner centromere protein B (892 aa).

Disordered stretches follow at residues 50 to 124 (AEPE…KRMT), 160 to 182 (EHERRSAEQKLRESEIEDSEMKT), 255 to 286 (LVNEQPLNLSNESATPTGSKSDRRSVRRSLVV), 305 to 470 (KRES…PPPH), 502 to 555 (KRNT…RRED), 569 to 687 (QLEE…RERE), 702 to 760 (ERAA…AAAA), and 797 to 819 (NYGMDLNSDDSTDDESQPRKPIP). Positions 60 to 69 (SQKRRRKKRT) are enriched in basic residues. Residues 90-99 (SANWSSSVRR) are compositionally biased toward low complexity. Polar residues predominate over residues 259-272 (QPLNLSNESATPTG). Residues 305–315 (KRESMTREAVR) are compositionally biased toward basic and acidic residues. Basic residues predominate over residues 316–326 (KSIRQSISKKK). A compositionally biased stretch (low complexity) spans 332 to 343 (SSTSSQRSCHSS). Residues 431–444 (RAVDELSDDERPSE) show a composition bias toward basic and acidic residues. Residues 455 to 470 (PSPPCPPSKIVKPPPH) show a composition bias toward pro residues. Composition is skewed to basic and acidic residues over residues 509–555 (PDPK…RRED), 569–602 (QLEEEKKKKFEQKFAQIDEKSEKVREDRMAEEKA), 609–687 (KKQE…RERE), and 702–754 (ERAA…KAKE). The interval 512-725 (KSEEKERQRL…EERKKREQQQ (214 aa)) is SAH. Residues 802–876 (LNSDDSTDDE…RTSSAVWHSP (75 aa)) form an IN box region. A phosphoserine mark is found at S869 and S870.

This sequence belongs to the INCENP family. As to quaternary structure, component of the CPC at least composed of survivin/birc5, incenp, cdca8/borealin and/or cdca9/dasra-A, and aurkb/aurora-B. Interacts (via C-terminus) with aurkb (via N-terminus and kinase domain). Interacts (via N-terminus) with birc5.1, birc5.2, cdca8 and cdca9. Interacts with mtus1.

The protein localises to the nucleus. Its subcellular location is the chromosome. It localises to the centromere. It is found in the cytoplasm. The protein resides in the cytoskeleton. The protein localises to the spindle. Its subcellular location is the midbody. It localises to the kinetochore. In terms of biological role, component of the chromosomal passenger complex (CPC), a complex that acts as a key regulator of mitosis. The CPC complex has essential functions at the centromere in ensuring correct chromosome alignment and segregation and is required for chromatin-induced microtubule stabilization and spindle assembly. Acts as a scaffold regulating CPC localization and activity. The C-terminus associates with aurkb/aurora-B, the N-terminus associated with cdca8/borealin and/or cdca9/dasra-A tethers the CPC to the inner centromere, and the microtubule binding activity within the central SAH domain directs aurkb/aurora-B toward substrates near microtubules. Activates aurkb. This is Inner centromere protein B (incenp-b) from Xenopus laevis (African clawed frog).